The following is a 364-amino-acid chain: Chorismate synthase (364 aa).

Positions 48 and 54 each coordinate NADP(+). Residues 130–132 (RSS), 242–243 (NA), Gly287, 302–306 (KPTSS), and Arg328 contribute to the FMN site.

It belongs to the chorismate synthase family. Homotetramer. The cofactor is FMNH2.

The catalysed reaction is 5-O-(1-carboxyvinyl)-3-phosphoshikimate = chorismate + phosphate. It participates in metabolic intermediate biosynthesis; chorismate biosynthesis; chorismate from D-erythrose 4-phosphate and phosphoenolpyruvate: step 7/7. Its function is as follows. Catalyzes the anti-1,4-elimination of the C-3 phosphate and the C-6 proR hydrogen from 5-enolpyruvylshikimate-3-phosphate (EPSP) to yield chorismate, which is the branch point compound that serves as the starting substrate for the three terminal pathways of aromatic amino acid biosynthesis. This reaction introduces a second double bond into the aromatic ring system. This Allorhizobium ampelinum (strain ATCC BAA-846 / DSM 112012 / S4) (Agrobacterium vitis (strain S4)) protein is Chorismate synthase.